A 585-amino-acid polypeptide reads, in one-letter code: Glutamate decarboxylase (585 aa).

A compositionally biased stretch (polar residues) spans 35–56 (KSAVQSGHQGSNNMRDTSSQGM). The disordered stretch occupies residues 35–60 (KSAVQSGHQGSNNMRDTSSQGMANKY). The residue at position 318 (Lys318) is an N6-(pyridoxal phosphate)lysine.

This sequence belongs to the group II decarboxylase family. Pyridoxal 5'-phosphate serves as cofactor.

The enzyme catalyses L-glutamate + H(+) = 4-aminobutanoate + CO2. The protein is Glutamate decarboxylase (GAD1) of Saccharomyces cerevisiae (strain ATCC 204508 / S288c) (Baker's yeast).